Here is a 149-residue protein sequence, read N- to C-terminus: Pleckstrin homology domain-containing family J member 1 (149 aa).

A PH domain is found at 15-108 (PAEMAAELGM…WMEALRRASY (94 aa)).

In terms of tissue distribution, expressed in testis and liver.

The protein is Pleckstrin homology domain-containing family J member 1 (PLEKHJ1) of Homo sapiens (Human).